A 209-amino-acid polypeptide reads, in one-letter code: High frequency lysogenization protein HflD homolog (209 aa).

Positions 79–121 (QGLNAELTRYTLSLMVLERKLNSAKGAMDTLGDRIAGLQRQLD) form a coiled coil.

The protein belongs to the HflD family.

It localises to the cytoplasm. The protein resides in the cell inner membrane. The protein is High frequency lysogenization protein HflD homolog of Enterobacter sp. (strain 638).